The sequence spans 73 residues: Small ribosomal subunit protein bS18B (73 aa).

This sequence belongs to the bacterial ribosomal protein bS18 family. As to quaternary structure, part of the 30S ribosomal subunit. Forms a tight heterodimer with protein bS6.

In terms of biological role, binds as a heterodimer with protein bS6 to the central domain of the 16S rRNA, where it helps stabilize the platform of the 30S subunit. The polypeptide is Small ribosomal subunit protein bS18B (Frankia alni (strain DSM 45986 / CECT 9034 / ACN14a)).